The following is a 632-amino-acid chain: Putative golgin subfamily A member 8I (632 aa).

Residues 1-77 (MAEETQHNKL…SSATLKDLES (77 aa)) are disordered. A compositionally biased stretch (polar residues) spans 38–50 (TNGSIPQTATSGG). 2 coiled-coil regions span residues 86 to 154 (LDSR…HMKR) and 209 to 421 (KLEQ…SLMA). The span at 352-362 (KQEERIQEQHK) shows a compositional bias: basic and acidic residues. Disordered regions lie at residues 352-383 (KQEERIQEQHKSLQQLAKPQSVFEEPNNENKS), 423-445 (PGEGHGGEHLDSEGEEAPQPMPS), 496-524 (LSEPGGRAKDAALGGGHHQAGAQGGDEGE), and 550-569 (AHNPADEPGPGAPAPQELGA). Over residues 508–520 (LGGGHHQAGAQGG) the composition is skewed to gly residues. The golgi-targeting domain stretch occupies residues 529–632 (AADGIAAYSN…CWAWLPRRRR (104 aa)). Positions 555–568 (DEPGPGAPAPQELG) are enriched in low complexity.

The protein belongs to the GOLGA8 family.

The protein localises to the golgi apparatus. The protein resides in the golgi stack membrane. Its function is as follows. May be involved in maintaining Golgi structure. The protein is Putative golgin subfamily A member 8I of Homo sapiens (Human).